The sequence spans 93 residues: MEKKDLSLSVTLIDVYCSISLYCSNSTSGYFSTNNGKASAKSVRFPTGSGNGIYPPLKWTNLFCNFILIAPGLFNSSSFNVIKKGTPNNIAFL.

This is an uncharacterized protein from Saccharomyces cerevisiae (strain ATCC 204508 / S288c) (Baker's yeast).